A 321-amino-acid polypeptide reads, in one-letter code: Chlorohydroquinone/hydroquinone 1,2-dioxygenase (321 aa).

VOC domains follow at residues 10–138 (GLHH…IIEQ) and 160–282 (GFHS…ASVT). The Fe cation site is built by His162, His229, and Glu278.

This sequence belongs to the extradiol ring-cleavage dioxygenase family. Fe(2+) is required as a cofactor.

It carries out the reaction hydroquinone + O2 = (2E,4Z)-4-hydroxy-6-oxohexa-2,4-dienoate + H(+). The enzyme catalyses chlorohydroquinone + O2 = 5-chlorocarbonyl-4-hydroxy-penta-2,4-dienoate + H(+). It functions in the pathway xenobiotic degradation; gamma-hexachlorocyclohexane degradation. Its function is as follows. Cleaves aromatic rings with two hydroxyl groups at para positions with consumption of O(2). Catalyzes the cleavage of chlorohydroquinone (CHQ), as part of the gamma-hexachlorocyclohexane (gamma-HCH or lindane) degradation pathway, producing 5-chlorocarbonyl-4-hydroxy-penta-2,4-dienoate as an intermediate product that can react with water yielding maleylacetate. This degradation pathway allows S.japonicum UT26 to grow on gamma-HCH as the sole source of carbon and energy. Can also use hydroquinone (HQ) as substrate, leading to gamma-hydroxymuconic semialdehyde. Is not able to convert catechol, contrary to meta-cleavage dioxygenases. In Sphingobium indicum (strain DSM 16413 / CCM 7287 / MTCC 6362 / UT26 / NBRC 101211 / UT26S) (Sphingobium japonicum), this protein is Chlorohydroquinone/hydroquinone 1,2-dioxygenase.